The primary structure comprises 138 residues: Ribosome-binding factor A (138 aa).

Residues 117 to 138 are disordered; it reads ERQNKPAASTEKPPVGSLDADL.

The protein belongs to the RbfA family. As to quaternary structure, monomer. Binds 30S ribosomal subunits, but not 50S ribosomal subunits or 70S ribosomes.

Its subcellular location is the cytoplasm. Functionally, one of several proteins that assist in the late maturation steps of the functional core of the 30S ribosomal subunit. Associates with free 30S ribosomal subunits (but not with 30S subunits that are part of 70S ribosomes or polysomes). Required for efficient processing of 16S rRNA. May interact with the 5'-terminal helix region of 16S rRNA. The chain is Ribosome-binding factor A from Acaryochloris marina (strain MBIC 11017).